Reading from the N-terminus, the 662-residue chain is Acetyl-coenzyme A synthetase (662 aa).

CoA contacts are provided by residues 197-200 (RKGK) and Thr317. Residues 393 to 395 (GEP), 417 to 422 (DTWWQT), Asp510, and Arg525 each bind ATP. A CoA-binding site is contributed by Ser533. Residue Arg536 coordinates ATP. Residues His549 and Val552 each coordinate Mg(2+). Lys623 is modified (N6-acetyllysine).

Belongs to the ATP-dependent AMP-binding enzyme family. Requires Mg(2+) as cofactor. Post-translationally, acetylated. Deacetylation by the SIR2-homolog deacetylase activates the enzyme.

The catalysed reaction is acetate + ATP + CoA = acetyl-CoA + AMP + diphosphate. Functionally, catalyzes the conversion of acetate into acetyl-CoA (AcCoA), an essential intermediate at the junction of anabolic and catabolic pathways. AcsA undergoes a two-step reaction. In the first half reaction, AcsA combines acetate with ATP to form acetyl-adenylate (AcAMP) intermediate. In the second half reaction, it can then transfer the acetyl group from AcAMP to the sulfhydryl group of CoA, forming the product AcCoA. This chain is Acetyl-coenzyme A synthetase, found in Helicobacter pylori (strain P12).